Here is a 325-residue protein sequence, read N- to C-terminus: Tetraacyldisaccharide 4'-kinase (325 aa).

53–60 (SVGGNGKT) provides a ligand contact to ATP.

It belongs to the LpxK family.

The enzyme catalyses a lipid A disaccharide + ATP = a lipid IVA + ADP + H(+). Its pathway is glycolipid biosynthesis; lipid IV(A) biosynthesis; lipid IV(A) from (3R)-3-hydroxytetradecanoyl-[acyl-carrier-protein] and UDP-N-acetyl-alpha-D-glucosamine: step 6/6. Its function is as follows. Transfers the gamma-phosphate of ATP to the 4'-position of a tetraacyldisaccharide 1-phosphate intermediate (termed DS-1-P) to form tetraacyldisaccharide 1,4'-bis-phosphate (lipid IVA). The sequence is that of Tetraacyldisaccharide 4'-kinase from Actinobacillus succinogenes (strain ATCC 55618 / DSM 22257 / CCUG 43843 / 130Z).